The sequence spans 581 residues: NADH-quinone oxidoreductase subunit C/D (581 aa).

Positions 1-172 are NADH dehydrogenase I subunit C; it reads MSAVELVNEL…PPFVMTAARF (172 aa). Positions 196–581 are NADH dehydrogenase I subunit D; it reads ELMILNYGPH…IDYVMSDVDR (386 aa).

It in the N-terminal section; belongs to the complex I 30 kDa subunit family. In the C-terminal section; belongs to the complex I 49 kDa subunit family. NDH-1 is composed of 13 different subunits. Subunits NuoB, CD, E, F, and G constitute the peripheral sector of the complex.

It localises to the cell inner membrane. It catalyses the reaction a quinone + NADH + 5 H(+)(in) = a quinol + NAD(+) + 4 H(+)(out). Its function is as follows. NDH-1 shuttles electrons from NADH, via FMN and iron-sulfur (Fe-S) centers, to quinones in the respiratory chain. The immediate electron acceptor for the enzyme in this species is believed to be ubiquinone. Couples the redox reaction to proton translocation (for every two electrons transferred, four hydrogen ions are translocated across the cytoplasmic membrane), and thus conserves the redox energy in a proton gradient. The chain is NADH-quinone oxidoreductase subunit C/D from Rhodopseudomonas palustris (strain BisB18).